The sequence spans 265 residues: Neutrophil elastase (265 aa).

The first 26 residues, 1–26 (MALGRLSSRTLAAMLLALFLGGPALA), serve as a signal peptide directing secretion. In terms of domain architecture, Peptidase S1 spans 29–247 (IVGGRPARPH…FADWINSIIR (219 aa)). The cysteines at positions 54 and 70 are disulfide-linked. Residues histidine 69 and aspartate 116 each act as charge relay system in the active site. Residues asparagine 123 and asparagine 172 are each glycosylated (N-linked (GlcNAc...) asparagine). Cystine bridges form between cysteine 150/cysteine 208, cysteine 180/cysteine 187, and cysteine 198/cysteine 223. Serine 202 (charge relay system) is an active-site residue.

This sequence belongs to the peptidase S1 family. Elastase subfamily. In terms of assembly, interacts with NOTCH2NL.

It catalyses the reaction Hydrolysis of proteins, including elastin. Preferential cleavage: Val-|-Xaa &gt; Ala-|-Xaa.. Serine protease that modifies the functions of natural killer cells, monocytes and granulocytes. Inhibits C5a-dependent neutrophil enzyme release and chemotaxis. Promotes blood coagulation. Through the activation of the platelet fibrinogen receptor integrin alpha-IIb/beta-3, potentiates platelet aggregation induced by a threshold concentration of cathepsin G (CTSG). Cleaves and thus inactivates tissue factor pathway inhibitor (TFPI). Capable of killing E.coli; probably digests outer membrane protein A (ompA) in E.coli. The polypeptide is Neutrophil elastase (Elane) (Mus musculus (Mouse)).